Reading from the N-terminus, the 226-residue chain is Uracil-DNA glycosylase (226 aa).

D64 acts as the Proton acceptor in catalysis.

It belongs to the uracil-DNA glycosylase (UDG) superfamily. UNG family.

It is found in the cytoplasm. It catalyses the reaction Hydrolyzes single-stranded DNA or mismatched double-stranded DNA and polynucleotides, releasing free uracil.. Functionally, excises uracil residues from the DNA which can arise as a result of misincorporation of dUMP residues by DNA polymerase or due to deamination of cytosine. The sequence is that of Uracil-DNA glycosylase from Fusobacterium nucleatum subsp. nucleatum (strain ATCC 25586 / DSM 15643 / BCRC 10681 / CIP 101130 / JCM 8532 / KCTC 2640 / LMG 13131 / VPI 4355).